The following is a 241-amino-acid chain: Parkin coregulated gene protein homolog (241 aa).

In terms of assembly, microtubule inner protein component of sperm flagellar doublet microtubules. Forms a large molecular chaperone complex containing heat shock proteins 70 and 90 and chaperonin components. Interacts with STIP1, PRKN, GPR37, HSPA8, TCP1/CCT1, CCT2, CCT3, CCT4, CCT5, CCT6A, CCT7 and CCT8. Interacts with MEIG1.

The protein localises to the cytoplasm. Its subcellular location is the cytoskeleton. It localises to the cilium axoneme. It is found in the flagellum axoneme. Microtubule inner protein (MIP) part of the dynein-decorated doublet microtubules (DMTs) in cilia axoneme, which is required for motile cilia beating. Suppresses cell death induced by accumulation of unfolded Pael receptor (Pael-R, a substrate of Parkin). Facilitates the formation of inclusions consisting of Pael-R, molecular chaperones, protein degradation molecules and itself when proteasome is inhibited. May play an important role in the formation of Lewy bodies and protection of dopaminergic neurons against Parkinson disease. This Mus musculus (Mouse) protein is Parkin coregulated gene protein homolog (Pacrg).